The chain runs to 91 residues: Large ribosomal subunit protein bL27 (91 aa).

A disordered region spans residues 1-22 (MAHKKGQGSSRNGRDSNPQYRG). The segment covering 7–19 (QGSSRNGRDSNPQ) has biased composition (polar residues).

The protein belongs to the bacterial ribosomal protein bL27 family.

The sequence is that of Large ribosomal subunit protein bL27 from Myxococcus xanthus (strain DK1622).